Reading from the N-terminus, the 261-residue chain is Taurine import ATP-binding protein TauB (261 aa).

Residues 4–233 (LTADRVSVRY…RWRAGDSARA (230 aa)) enclose the ABC transporter domain. 38-45 (GPSGCGKT) is a binding site for ATP.

It belongs to the ABC transporter superfamily. Taurine importer (TC 3.A.1.17.1) family. In terms of assembly, the complex is composed of two ATP-binding proteins (TauB), two transmembrane proteins (TauC) and a solute-binding protein (TauA).

The protein resides in the cell inner membrane. It catalyses the reaction taurine(out) + ATP + H2O = taurine(in) + ADP + phosphate + H(+). Its function is as follows. Part of the ABC transporter complex TauABC involved in taurine import. Responsible for energy coupling to the transport system. The protein is Taurine import ATP-binding protein TauB of Chromobacterium violaceum (strain ATCC 12472 / DSM 30191 / JCM 1249 / CCUG 213 / NBRC 12614 / NCIMB 9131 / NCTC 9757 / MK).